A 463-amino-acid polypeptide reads, in one-letter code: Interleukin enhancer-binding factor 2 (463 aa).

R94 carries the post-translational modification Asymmetric dimethylarginine; alternate. An Omega-N-methylarginine; alternate modification is found at R94. The DZF domain occupies 108-444; it reads RHILAYDWLA…PEKKEGEEEE (337 aa). R145 is modified (omega-N-methylarginine). A Glycyl lysine isopeptide (Lys-Gly) (interchain with G-Cter in ubiquitin) cross-link involves residue K166. S173 and S189 each carry phosphoserine. Glycyl lysine isopeptide (Lys-Gly) (interchain with G-Cter in SUMO2) cross-links involve residues K259 and K437. The segment at 424–463 is disordered; that stretch reads VTPSEKAYEKPPEKKEGEEEEENTEEPPQGEEEESMETQE. The span at 429–440 shows a compositional bias: basic and acidic residues; it reads KAYEKPPEKKEG. Residues 441-463 are compositionally biased toward acidic residues; it reads EEEEENTEEPPQGEEEESMETQE. At T461 the chain carries Phosphothreonine.

In terms of assembly, forms heterodimers with ILF3. ILF2-ILF3 heterodimers may also bind to PRKDC/XRCC7: this may stabilize the interaction of PRKDC/XRCC7 and the heterodimeric complex of G22P1/KU70 and XRCC5/KU80. Forms a complex with ILF3, YLPM1, KHDRBS1, RBMX, NCOA5 and PPP1CA. Identified in a IGF2BP1-dependent mRNP granule complex containing untranslated mRNAs. Interacts with IGF2BP1. Interacts with CRBN; this interaction promotes ubiquitination and subsequent degradation of ILF2. In terms of processing, ubiquitinated at Lys-166 by CRBN with polyubiquitin chains by the CUL4-RING E3 ligase (CRL4-CRBN) and then degraded by the proteasome.

The protein localises to the nucleus. Its subcellular location is the nucleolus. It is found in the cytoplasm. Chromatin-interacting protein that forms a stable heterodimer with interleukin enhancer-binding factor 3/ILF3 and plays a role in several biological processes including transcription, innate immunity or cell growth. Essential for the efficient reshuttling of ILF3 (isoform 1 and isoform 2) into the nucleus. Together with ILF3, forms an RNA-binding complex that is required for mitotic progression and cytokinesis by regulating the expression of a cluster of mitotic genes. Mechanistically, competes with STAU1/STAU2-mediated mRNA decay. Plays also a role in the inhibition of various viruses including Japanese encephalitis virus or enterovirus 71. This is Interleukin enhancer-binding factor 2 (Ilf2) from Rattus norvegicus (Rat).